Reading from the N-terminus, the 173-residue chain is NADH-quinone oxidoreductase subunit I 2 (173 aa).

2 4Fe-4S ferredoxin-type domains span residues 41–73 and 83–112; these read IVLT…LAKA and EYFR…LTPD. Residues cysteine 53, cysteine 56, cysteine 59, cysteine 63, cysteine 92, cysteine 95, cysteine 98, and cysteine 102 each coordinate [4Fe-4S] cluster. Over residues 153 to 163 the composition is skewed to basic and acidic residues; sequence GKDKGEAEHEA. The tract at residues 153–173 is disordered; sequence GKDKGEAEHEAPPVNLKGLLP.

This sequence belongs to the complex I 23 kDa subunit family. As to quaternary structure, NDH-1 is composed of 14 different subunits. Subunits NuoA, H, J, K, L, M, N constitute the membrane sector of the complex. [4Fe-4S] cluster is required as a cofactor.

It localises to the cell inner membrane. It carries out the reaction a quinone + NADH + 5 H(+)(in) = a quinol + NAD(+) + 4 H(+)(out). In terms of biological role, NDH-1 shuttles electrons from NADH, via FMN and iron-sulfur (Fe-S) centers, to quinones in the respiratory chain. The immediate electron acceptor for the enzyme in this species is believed to be ubiquinone. Couples the redox reaction to proton translocation (for every two electrons transferred, four hydrogen ions are translocated across the cytoplasmic membrane), and thus conserves the redox energy in a proton gradient. The chain is NADH-quinone oxidoreductase subunit I 2 from Rhodopseudomonas palustris (strain ATCC BAA-98 / CGA009).